We begin with the raw amino-acid sequence, 320 residues long: Serpentine receptor class delta-28 (320 aa).

7 helical membrane passes run 5–25 (LLHT…MYLA), 38–58 (AIIT…FFVM), 83–103 (ACYI…IWMI), 122–142 (SLVF…ATWI), 176–196 (LTLI…YAWI), 230–250 (FLPS…TQLI), and 258–278 (LVSV…ILFV).

The protein belongs to the nematode receptor-like protein srd family.

Its subcellular location is the membrane. This chain is Serpentine receptor class delta-28 (srd-28), found in Caenorhabditis elegans.